A 263-amino-acid chain; its full sequence is Tryptophan 2,3-dioxygenase (263 aa).

Substrate-binding positions include 32–36 (FIIVH), Tyr94, and Arg98. His221 serves as a coordination point for heme. Residue Thr235 coordinates substrate.

Belongs to the tryptophan 2,3-dioxygenase family. In terms of assembly, homotetramer. Heme serves as cofactor.

The catalysed reaction is L-tryptophan + O2 = N-formyl-L-kynurenine. The protein operates within amino-acid degradation; L-tryptophan degradation via kynurenine pathway; L-kynurenine from L-tryptophan: step 1/2. Heme-dependent dioxygenase that catalyzes the oxidative cleavage of the L-tryptophan (L-Trp) pyrrole ring and converts L-tryptophan to N-formyl-L-kynurenine. Catalyzes the oxidative cleavage of the indole moiety. The sequence is that of Tryptophan 2,3-dioxygenase from Erythrobacter litoralis (strain HTCC2594).